A 431-amino-acid polypeptide reads, in one-letter code: Serine hydroxymethyltransferase (431 aa).

122-124 (GHI) is a (6S)-5,6,7,8-tetrahydrofolate binding site. Lys-228 is subject to N6-(pyridoxal phosphate)lysine. Position 245 (Glu-245) interacts with (6S)-5,6,7,8-tetrahydrofolate.

This sequence belongs to the SHMT family. Homodimer. Pyridoxal 5'-phosphate serves as cofactor.

It localises to the cytoplasm. The protein operates within amino-acid biosynthesis; glycine biosynthesis; glycine from L-serine: step 1/1. Catalyzes the reversible interconversion of serine and glycine with a modified folate serving as the one-carbon carrier. Also exhibits a pteridine-independent aldolase activity toward beta-hydroxyamino acids, producing glycine and aldehydes, via a retro-aldol mechanism. This chain is Serine hydroxymethyltransferase, found in Thermococcus kodakarensis (strain ATCC BAA-918 / JCM 12380 / KOD1) (Pyrococcus kodakaraensis (strain KOD1)).